We begin with the raw amino-acid sequence, 146 residues long: Transcriptional regulator MraZ (146 aa).

SpoVT-AbrB domains follow at residues 5–47 (EYYH…TITD) and 76–119 (SVQV…AKER).

This sequence belongs to the MraZ family. As to quaternary structure, forms oligomers.

It is found in the cytoplasm. The protein resides in the nucleoid. This Dictyoglomus turgidum (strain DSM 6724 / Z-1310) protein is Transcriptional regulator MraZ.